Here is a 252-residue protein sequence, read N- to C-terminus: 5'-nucleotidase SurE (252 aa).

A divalent metal cation-binding residues include aspartate 8, aspartate 9, serine 39, and asparagine 91.

Belongs to the SurE nucleotidase family. The cofactor is a divalent metal cation.

The protein localises to the cytoplasm. The catalysed reaction is a ribonucleoside 5'-phosphate + H2O = a ribonucleoside + phosphate. Functionally, nucleotidase that shows phosphatase activity on nucleoside 5'-monophosphates. This chain is 5'-nucleotidase SurE, found in Gemmatimonas aurantiaca (strain DSM 14586 / JCM 11422 / NBRC 100505 / T-27).